The sequence spans 259 residues: UPF0246 protein PSPPH_1119 (259 aa).

Belongs to the UPF0246 family.

In Pseudomonas savastanoi pv. phaseolicola (strain 1448A / Race 6) (Pseudomonas syringae pv. phaseolicola (strain 1448A / Race 6)), this protein is UPF0246 protein PSPPH_1119.